Reading from the N-terminus, the 712-residue chain is Transferrin-binding protein B (712 aa).

An N-terminal signal peptide occupies residues 1 to 20; it reads MNNPLVNQAAMVLPVFLLSA. Cys21 is lipidated: N-palmitoyl cysteine. A lipid anchor (S-diacylglycerol cysteine) is attached at Cys21. Residues 59-196 are N-terminal handle domain; that stretch reads GGYGFAMRLK…YHGKEPSRQL (138 aa). Disordered stretches follow at residues 78–104, 123–144, 223–256, 309–338, 364–398, 442–495, and 689–712; these read EDEV…PKRQ, PYLK…QPKN, IIQP…LTDG, NGKA…SLSG, SAKT…SSEN, ASES…GDTN, and NATN…QPVR. Residues 95 to 104 show a composition bias toward basic and acidic residues; the sequence is DEPKELPKRQ. The segment covering 128-144 has biased composition (polar residues); it reads SNHQNGNTGNGINQPKN. The interval 197–367 is N-terminal beta barrel domain; the sequence is PASGKITYKG…KVAVVGSAKT (171 aa). 2 stretches are compositionally biased toward low complexity: residues 372–398 and 446–459; these read ANGN…SSEN and GNNQ…GGTA. The segment at 389 to 555 is C-terminal handle domain; the sequence is NGAAGTSSEN…SMFLQGERTD (167 aa). A compositionally biased stretch (basic and acidic residues) spans 462 to 475; the sequence is RKFDHTPESDKKDA. 2 stretches are compositionally biased toward polar residues: residues 477-495 and 689-700; these read AGTQ…GDTN and NATNASGNSSAT. A C-terminal beta barrel domain region spans residues 556 to 712; it reads EKEIPSEQNI…FGAKRQQPVR (157 aa).

This sequence belongs to the TbpB family. Isotype II subfamily. Binds only human holo-transferrin (TF), via the TF C-terminus. Forms a large complex with TF and TbpA. Interacts via its C-terminal domain with Slam1.

The protein resides in the cell outer membrane. It is found in the cell surface. Its function is as follows. Neisseria acquires iron by extracting it from serum transferrin (TF) in its human host. Acts as a TF receptor and is required for TF utilization. Involved in the initial capture of TF. Helps select only those TF molecules that can be used as an iron source and concentrates them on the cell surface, maintaining the iron-loaded status of the TF C-terminal lobe until its delivery to TbpA. The chain is Transferrin-binding protein B from Neisseria meningitidis serogroup B (strain ATCC BAA-335 / MC58).